The sequence spans 230 residues: Ureidoacrylate amidohydrolase RutB (230 aa).

The active-site Proton acceptor is Asp24. The active site involves Lys133. The Nucleophile role is filled by Cys166.

Belongs to the isochorismatase family. RutB subfamily.

The catalysed reaction is (Z)-3-ureidoacrylate + H2O + H(+) = (Z)-3-aminoacrylate + NH4(+) + CO2. It catalyses the reaction (Z)-3-ureidoacrylate + H2O = (Z)-3-aminoacrylate + carbamate + H(+). The enzyme catalyses (Z)-2-methylureidoacrylate + H2O + H(+) = (Z)-2-methylaminoacrylate + NH4(+) + CO2. Hydrolyzes ureidoacrylate to form aminoacrylate and carbamate. The carbamate hydrolyzes spontaneously, thereby releasing one of the nitrogen atoms of the pyrimidine ring as ammonia and one of its carbon atoms as CO2. The polypeptide is Ureidoacrylate amidohydrolase RutB (Escherichia coli O157:H7).